A 192-amino-acid polypeptide reads, in one-letter code: MAYLDEIQLKEMGFKSVGENVKISDKASFYGCDNISIGNNVRIDDFCVFSAGEGGIDIHDYIHIAVYSSIIGKGKVTISDYANISSRVSIYSSNEYYSGNYMSNPVVPSEYTNIHSGTVFIGKHVIIGCGSIVLPDVILHEGAAIGALSVVKEDCEAFTVNVGIPAKPISERSKKLLELESVFKPSAIGDNL.

This sequence belongs to the transferase hexapeptide repeat family.

It carries out the reaction dTDP-4-amino-4,6-dideoxy-alpha-D-glucose + acetyl-CoA = dTDP-4-acetamido-4,6-dideoxy-alpha-D-glucose + CoA + H(+). It participates in bacterial outer membrane biogenesis; lipopolysaccharide biosynthesis. Its function is as follows. Catalyzes the conversion of dTDP-4-amino-4,6-dideoxy-D-glucose (dTDP-D-Qui4N) to dTDP-4-acetamido-4,6-dideoxy-D-glucose (dTDP-D-Qui4NAc). In Escherichia coli, this protein is dTDP-4-amino-4,6-dideoxy-D-glucose acyltransferase (vioB).